Here is a 104-residue protein sequence, read N- to C-terminus: uncharacterized protein (104 aa).

This is an uncharacterized protein from Acidianus two-tailed virus (ATV).